The sequence spans 316 residues: Pantothenate kinase (316 aa).

ATP is bound at residue 95-102 (GSVAVGKS).

The protein belongs to the prokaryotic pantothenate kinase family.

It localises to the cytoplasm. It catalyses the reaction (R)-pantothenate + ATP = (R)-4'-phosphopantothenate + ADP + H(+). Its pathway is cofactor biosynthesis; coenzyme A biosynthesis; CoA from (R)-pantothenate: step 1/5. The protein is Pantothenate kinase of Cronobacter sakazakii (strain ATCC BAA-894) (Enterobacter sakazakii).